The following is a 96-amino-acid chain: UPF0235 protein YggU (96 aa).

This sequence belongs to the UPF0235 family.

In Salmonella arizonae (strain ATCC BAA-731 / CDC346-86 / RSK2980), this protein is UPF0235 protein YggU.